Here is a 382-residue protein sequence, read N- to C-terminus: Pyrimidine monooxygenase RutA (382 aa).

FMN is bound by residues 68 to 69, Asn134, Glu143, 159 to 160, and Ser209; these read IK and RY.

It belongs to the NtaA/SnaA/DszA monooxygenase family. RutA subfamily.

It carries out the reaction uracil + FMNH2 + NADH + O2 = (Z)-3-ureidoacrylate + FMN + NAD(+) + H2O + H(+). The catalysed reaction is thymine + FMNH2 + NADH + O2 = (Z)-2-methylureidoacrylate + FMN + NAD(+) + H2O + H(+). Its function is as follows. Catalyzes the pyrimidine ring opening between N-3 and C-4 by an unusual flavin hydroperoxide-catalyzed mechanism, adding oxygen atoms in the process to yield ureidoacrylate peracid, that immediately reacts with FMN forming ureidoacrylate and FMN-N(5)-oxide. The FMN-N(5)-oxide reacts spontaneously with NADH to produce FMN. Requires the flavin reductase RutF to regenerate FMN in vivo. This Escherichia coli O8 (strain IAI1) protein is Pyrimidine monooxygenase RutA.